A 384-amino-acid chain; its full sequence is Putative dioxygenase SSO1533 (384 aa).

The Fe cation site is built by H296, E302, and H332.

It belongs to the homogentisate dioxygenase family. Requires Fe cation as cofactor.

The protein is Putative dioxygenase SSO1533 of Saccharolobus solfataricus (strain ATCC 35092 / DSM 1617 / JCM 11322 / P2) (Sulfolobus solfataricus).